Reading from the N-terminus, the 474-residue chain is Siroheme synthase (474 aa).

Residues 1 to 203 are precorrin-2 dehydrogenase /sirohydrochlorin ferrochelatase; that stretch reads MKLFPLFADL…QRPEEAERLL (203 aa). NAD(+)-binding positions include 22-23 and 43-44; these read EI and PA. A Phosphoserine modification is found at Ser-128. A uroporphyrinogen-III C-methyltransferase region spans residues 216 to 474; that stretch reads GSVVLVGAGP…QRPAPAALAA (259 aa). Pro-225 is a binding site for S-adenosyl-L-methionine. The active-site Proton acceptor is the Asp-248. Lys-270 acts as the Proton donor in catalysis. S-adenosyl-L-methionine is bound by residues 302-304, Ile-307, 332-333, Met-384, and Gly-413; these read GGD and TA.

It in the N-terminal section; belongs to the precorrin-2 dehydrogenase / sirohydrochlorin ferrochelatase family. In the C-terminal section; belongs to the precorrin methyltransferase family.

The catalysed reaction is uroporphyrinogen III + 2 S-adenosyl-L-methionine = precorrin-2 + 2 S-adenosyl-L-homocysteine + H(+). It carries out the reaction precorrin-2 + NAD(+) = sirohydrochlorin + NADH + 2 H(+). The enzyme catalyses siroheme + 2 H(+) = sirohydrochlorin + Fe(2+). It functions in the pathway cofactor biosynthesis; adenosylcobalamin biosynthesis; precorrin-2 from uroporphyrinogen III: step 1/1. The protein operates within cofactor biosynthesis; adenosylcobalamin biosynthesis; sirohydrochlorin from precorrin-2: step 1/1. It participates in porphyrin-containing compound metabolism; siroheme biosynthesis; precorrin-2 from uroporphyrinogen III: step 1/1. Its pathway is porphyrin-containing compound metabolism; siroheme biosynthesis; siroheme from sirohydrochlorin: step 1/1. It functions in the pathway porphyrin-containing compound metabolism; siroheme biosynthesis; sirohydrochlorin from precorrin-2: step 1/1. In terms of biological role, multifunctional enzyme that catalyzes the SAM-dependent methylations of uroporphyrinogen III at position C-2 and C-7 to form precorrin-2 via precorrin-1. Then it catalyzes the NAD-dependent ring dehydrogenation of precorrin-2 to yield sirohydrochlorin. Finally, it catalyzes the ferrochelation of sirohydrochlorin to yield siroheme. In Bordetella petrii (strain ATCC BAA-461 / DSM 12804 / CCUG 43448), this protein is Siroheme synthase.